The sequence spans 360 residues: DNA replication and repair protein RecF (360 aa).

30-37 (GHNGSGKT) is a binding site for ATP.

It belongs to the RecF family.

It localises to the cytoplasm. In terms of biological role, the RecF protein is involved in DNA metabolism; it is required for DNA replication and normal SOS inducibility. RecF binds preferentially to single-stranded, linear DNA. It also seems to bind ATP. In Shewanella denitrificans (strain OS217 / ATCC BAA-1090 / DSM 15013), this protein is DNA replication and repair protein RecF.